The following is a 767-amino-acid chain: ATP-dependent rRNA helicase SPB4 (767 aa).

Residues 28-56 (WTKLTPPLTPWVVSLLSDLGFGQMTPVQA) carry the Q motif motif. Positions 59-291 (IPLFVSHKDV…RIGLRNPVRV (233 aa)) constitute a Helicase ATP-binding domain. 72–79 (AVTGSGKT) contributes to the ATP binding site. Residues 132 to 176 (HVQAQQQQDQDEQDEQDEQEAQSDSDTDPDASTALNNKRKSSNHL) form a disordered region. A compositionally biased stretch (acidic residues) spans 140 to 160 (DQDEQDEQDEQEAQSDSDTDP). The DEAD box signature appears at 239-242 (DEAD). Residues 330–507 (QLARIVLFES…ILEPAEDDAS (178 aa)) form the Helicase C-terminal domain. The disordered stretch occupies residues 609–767 (KLSGDQAKPP…NADAEPFFVI (159 aa)). 2 stretches are compositionally biased toward basic and acidic residues: residues 636–645 (CDSHDSDDAH) and 659–681 (LERE…ANRE). Residues 654–746 (KNKRKLEREK…RANSDNDDAM (93 aa)) are a coiled coil. The span at 690 to 700 (LKTQAAESSSN) shows a compositional bias: polar residues. Residues 701-746 (AKHEPPQDDHDEHDWNDDYRKLQKDKRQQRQRNKADRANSDNDDAM) show a composition bias toward basic and acidic residues. Positions 749–761 (NSDSDAAAANADA) are enriched in low complexity.

The protein belongs to the DEAD box helicase family. DDX55/SPB4 subfamily. In terms of assembly, component of pre-60S ribosomal complexes.

Its subcellular location is the nucleus. It localises to the nucleolus. The catalysed reaction is ATP + H2O = ADP + phosphate + H(+). Its function is as follows. ATP-binding RNA helicase involved in the biogenesis of 60S ribosomal subunits. Binds 90S pre-ribosomal particles and dissociates from pre-60S ribosomal particles after processing of 27SB pre-rRNA. Required for the normal formation of 18S rRNA through the processing of pre-rRNAs at sites A0, A1 and A2, and the normal formation of 25S and 5.8S rRNAs through the processing of pre-rRNAs at sites C1 and C2. This is ATP-dependent rRNA helicase SPB4 from Mycosarcoma maydis (Corn smut fungus).